The chain runs to 457 residues: Multidrug resistance protein MdtK (457 aa).

12 helical membrane passes run 11 to 31 (LLAL…MGFV), 53 to 73 (IWLP…PVIA), 93 to 113 (WLAG…GYII), 127 to 147 (AVGY…FQVA), 160 to 180 (GMVM…IFIY), 189 to 209 (GGVG…LAMV), 243 to 263 (LPIA…ALLV), 276 to 296 (IALN…AAVT), 314 to 334 (AART…IFTV), 350 to 370 (VVTL…SDSI), 387 to 407 (IFYI…YILA), and 418 to 438 (PAGF…MMML).

It belongs to the multi antimicrobial extrusion (MATE) (TC 2.A.66.1) family. MdtK subfamily.

Its subcellular location is the cell inner membrane. Functionally, multidrug efflux pump that functions probably as a Na(+)/drug antiporter. The protein is Multidrug resistance protein MdtK of Escherichia coli O127:H6 (strain E2348/69 / EPEC).